Here is a 549-residue protein sequence, read N- to C-terminus: Glucose-6-phosphate isomerase (549 aa).

Residue E355 is the Proton donor of the active site. Active-site residues include H387 and K515.

It belongs to the GPI family.

Its subcellular location is the cytoplasm. The enzyme catalyses alpha-D-glucose 6-phosphate = beta-D-fructose 6-phosphate. It participates in carbohydrate biosynthesis; gluconeogenesis. Its pathway is carbohydrate degradation; glycolysis; D-glyceraldehyde 3-phosphate and glycerone phosphate from D-glucose: step 2/4. Functionally, catalyzes the reversible isomerization of glucose-6-phosphate to fructose-6-phosphate. The sequence is that of Glucose-6-phosphate isomerase from Mannheimia succiniciproducens (strain KCTC 0769BP / MBEL55E).